We begin with the raw amino-acid sequence, 190 residues long: Protein soem-1 (190 aa).

Residues 96–190 (YMEQNMNRVE…LVLKNQLKPV (95 aa)) enclose the SH2 domain.

Interacts with abl-1. In terms of tissue distribution, expressed in PQR, but not AQR, Q neuroblast descendents.

In terms of biological role, functions downstream of migratory protein mig-13 and may play a role in the control of Q neuroblast migration during larval development. In Caenorhabditis elegans, this protein is Protein soem-1.